Here is a 371-residue protein sequence, read N- to C-terminus: Neuropeptide S receptor (371 aa).

Polar residues predominate over residues 1–21; it reads MPANFTEGSFDSSGTGQTLDS. A disordered region spans residues 1–22; the sequence is MPANFTEGSFDSSGTGQTLDSS. The Extracellular portion of the chain corresponds to 1-52; that stretch reads MPANFTEGSFDSSGTGQTLDSSPVACTETVTFTEVVEGKEWGSFYYSFKTEQ. Residue Asn-4 is glycosylated (N-linked (GlcNAc...) asparagine). A helical membrane pass occupies residues 53-73; the sequence is LITLWVLFVFTIVGNSVVLFS. At 74 to 82 the chain is on the cytoplasmic side; the sequence is TWRRKKKSR. Residues 83-103 form a helical membrane-spanning segment; sequence MTFFVTQLAITDSFTGLVNIL. Residues 104–123 are Extracellular-facing; sequence TDINWRFTGDFTAPDLVCRV. Cysteines 121 and 197 form a disulfide. Residues 124–144 traverse the membrane as a helical segment; that stretch reads VRYLQVVLLYASTYVLVSLSI. Over 145–164 the chain is Cytoplasmic; it reads DRYHAIVYPMKFLQGEKQAR. Residues 165-185 form a helical membrane-spanning segment; it reads VLIVIAWSLSFLFSIPTLIIF. At 186-212 the chain is on the extracellular side; that stretch reads GKRTLSNGEVQCWALWPDDSYWTPYMT. Residues 213–233 traverse the membrane as a helical segment; it reads IVAFLVYFIPLTIISIMYGIV. At 234 to 275 the chain is on the cytoplasmic side; it reads IRTIWIKSKTYETVISNCSDGKLCSSYNRGLISKAKIKAIKY. The chain crosses the membrane as a helical span at residues 276–296; sequence SIIIILAFICCWSPYFLFDIL. Residues 297–312 are Extracellular-facing; sequence DNFNLLPDTQERFYAS. The chain crosses the membrane as a helical span at residues 313-333; that stretch reads VIIQNLPALNSAINPLIYCVF. The Cytoplasmic portion of the chain corresponds to 334–371; that stretch reads SSSISFPCREQRSQDSRMTFRERTERHEMQILSKPEFI.

The protein belongs to the G-protein coupled receptor 1 family. Vasopressin/oxytocin receptor subfamily. As to expression, isoform 4 is ubiquitous; it is detected in glandular epithelia of bronchus, stomach, small intestine, colon, uterus, esophagus, spleen, kidney, pancreas, prostate and breast. Isoform 1 is detected in uterus, colon and prostate, and in the smooth muscle cell layer in bronchial and arterial walls (at protein level). Isoform 1 is predominantly expressed in smooth muscle. Isoform 4 is predominantly expressed in epithelial cells. In bronchial biopsies, it is expressed in smooth muscle cells of asthma patients, but not in control patients; whereas in epithelial cells, its expression is consistently stronger in asthma patients.

The protein localises to the cell membrane. It is found in the cytoplasm. In terms of biological role, G-protein coupled receptor for neuropeptide S (NPS). Promotes mobilization of intracellular Ca(2+) stores. Inhibits cell growth in response to NPS binding. Involved in pathogenesis of asthma and other IgE-mediated diseases. The protein is Neuropeptide S receptor (NPSR1) of Homo sapiens (Human).